The primary structure comprises 1689 residues: DNA-directed RNA polymerase I subunit rpa1 (1689 aa).

4 residues coordinate Zn(2+): Cys63, Cys66, Cys73, and His76. A phosphoserine mark is found at Ser159 and Ser161. Positions 269–280 are enriched in basic and acidic residues; that stretch reads VLRDTSKKHHED. Positions 269-295 are disordered; sequence VLRDTSKKHHEDEGYDGDSDSSNESEV. Acidic residues predominate over residues 281–295; the sequence is EGYDGDSDSSNESEV. Mg(2+) contacts are provided by Asp643, Asp645, and Asp647. The segment at 1005–1017 is bridging helix; that stretch reads PQEYYFHCMAGRE. A disordered region spans residues 1346–1440; it reads RKSGGKDDTV…EEDEGFKSDE (95 aa). Residues Ser1438 and Ser1441 each carry the phosphoserine modification.

It belongs to the RNA polymerase beta' chain family. As to quaternary structure, component of the RNA polymerase I (Pol I) complex consisting of at least 13 subunits.

It is found in the nucleus. It localises to the nucleolus. The catalysed reaction is RNA(n) + a ribonucleoside 5'-triphosphate = RNA(n+1) + diphosphate. DNA-dependent RNA polymerase catalyzes the transcription of DNA into RNA using the four ribonucleoside triphosphates as substrates. Largest and catalytic core component of RNA polymerase I which synthesizes ribosomal RNA precursors. Forms the polymerase active center together with the second largest subunit. A single stranded DNA template strand of the promoter is positioned within the central active site cleft of Pol I. A bridging helix emanates from RPA1 and crosses the cleft near the catalytic site and is thought to promote translocation of Pol I by acting as a ratchet that moves the RNA-DNA hybrid through the active site by switching from straight to bent conformations at each step of nucleotide addition. This Schizosaccharomyces pombe (strain 972 / ATCC 24843) (Fission yeast) protein is DNA-directed RNA polymerase I subunit rpa1 (rpa1).